The primary structure comprises 344 residues: Heat-inducible transcription repressor HrcA (344 aa).

Belongs to the HrcA family.

Its function is as follows. Negative regulator of class I heat shock genes (grpE-dnaK-dnaJ and groELS operons). Prevents heat-shock induction of these operons. This chain is Heat-inducible transcription repressor HrcA, found in Streptococcus mutans serotype c (strain ATCC 700610 / UA159).